Consider the following 472-residue polypeptide: 3-isopropylmalate dehydratase large subunit (472 aa).

Residues cysteine 347, cysteine 407, and cysteine 410 each coordinate [4Fe-4S] cluster.

Belongs to the aconitase/IPM isomerase family. LeuC type 1 subfamily. In terms of assembly, heterodimer of LeuC and LeuD. It depends on [4Fe-4S] cluster as a cofactor.

It catalyses the reaction (2R,3S)-3-isopropylmalate = (2S)-2-isopropylmalate. It functions in the pathway amino-acid biosynthesis; L-leucine biosynthesis; L-leucine from 3-methyl-2-oxobutanoate: step 2/4. Functionally, catalyzes the isomerization between 2-isopropylmalate and 3-isopropylmalate, via the formation of 2-isopropylmaleate. This Synechococcus sp. (strain WH7803) protein is 3-isopropylmalate dehydratase large subunit.